Reading from the N-terminus, the 104-residue chain is Co-chaperonin GroES 1 (104 aa).

It belongs to the GroES chaperonin family. In terms of assembly, heptamer of 7 subunits arranged in a ring. Interacts with the chaperonin GroEL.

It localises to the cytoplasm. Functionally, together with the chaperonin GroEL, plays an essential role in assisting protein folding. The GroEL-GroES system forms a nano-cage that allows encapsulation of the non-native substrate proteins and provides a physical environment optimized to promote and accelerate protein folding. GroES binds to the apical surface of the GroEL ring, thereby capping the opening of the GroEL channel. This is Co-chaperonin GroES 1 from Mesorhizobium japonicum (strain LMG 29417 / CECT 9101 / MAFF 303099) (Mesorhizobium loti (strain MAFF 303099)).